The following is a 147-amino-acid chain: Transthyretin (147 aa).

The first 20 residues, 1-20, serve as a signal peptide directing secretion; sequence MASFRLLLLCLAGLVFVSEA. C30 bears the Sulfocysteine mark. K35 is an L-thyroxine binding site. E62 carries the 4-carboxyglutamate modification. Residue S72 is modified to Phosphoserine. Residue E74 coordinates L-thyroxine. Residue N118 is glycosylated (N-linked (GlcNAc...) asparagine). S137 contributes to the L-thyroxine binding site.

The protein belongs to the transthyretin family. As to quaternary structure, homotetramer. Dimer of dimers. In the homotetramer, subunits assemble around a central channel that can accommodate two ligand molecules. Interacts with RBP4. Post-translationally, sulfonation of the reactive cysteine Cys-30 enhances the stability of the native conformation of TTR, avoiding misassembly of the protein leading to amyloid formation. In terms of tissue distribution, highly expressed in the choroid plexus.

The protein resides in the secreted. Functionally, thyroid hormone-binding protein. Probably transports thyroxine from the bloodstream to the brain. In Ovis aries (Sheep), this protein is Transthyretin (TTR).